The sequence spans 118 residues: uncharacterized protein (118 aa).

C11 and C14 are joined by a disulfide.

This sequence belongs to the ArsC family.

This is an uncharacterized protein from Bacillus subtilis (strain 168).